We begin with the raw amino-acid sequence, 65 residues long: Neurotoxin BmK-M3 (65 aa).

An LCN-type CS-alpha/beta domain is found at 2 to 64 (RDAYIAKPEN…VPIRVWGKCH (63 aa)). 4 disulfides stabilise this stretch: cysteine 12–cysteine 63, cysteine 16–cysteine 36, cysteine 22–cysteine 46, and cysteine 26–cysteine 48.

This sequence belongs to the long (4 C-C) scorpion toxin superfamily. Sodium channel inhibitor family. Alpha subfamily. In terms of tissue distribution, expressed by the venom gland.

Its subcellular location is the secreted. In terms of biological role, binds to sodium channels (Nav) and inhibits the inactivation of the activated channels, thereby blocking neuronal transmission. This is Neurotoxin BmK-M3 from Olivierus martensii (Manchurian scorpion).